The following is a 317-amino-acid chain: Tricarboxylate transport protein B, mitochondrial (317 aa).

The propeptide at 1–20 (MSGSPKFVSPFHRPHCLSAA) is removed in mature form. 3 Solcar repeats span residues 29-117 (THPG…LSNQ), 128-214 (TRGL…LRNW), and 224-309 (INPV…VVKV). Transmembrane regions (helical) follow at residues 35 to 55 (ILAGGIAGGIEICITFPTEYV), 130 to 150 (GLICGLGAGVAEAVVVVCPME), 223 to 243 (SINPVVTGLFGAVAGAASVFG), and 294 to 314 (MDVAIVFIIYEEVVKVLNKVW).

The protein belongs to the mitochondrial carrier (TC 2.A.29) family. Post-translationally, possesses a short cleavable presequence, which, however, is found to be dispensable both for targeting to mitochondria and insertion into the inner membrane. However, the presequence is required to keep SLC25A1 in a soluble state and thus in an import-competent state. Mature SLC25A1 lacking the presequence is prone to aggregation.

Its subcellular location is the mitochondrion inner membrane. The catalysed reaction is (S)-malate(in) + citrate(out) = (S)-malate(out) + citrate(in). It catalyses the reaction D-threo-isocitrate(in) + citrate(out) = D-threo-isocitrate(out) + citrate(in). It carries out the reaction citrate(out) + succinate(in) = citrate(in) + succinate(out). The enzyme catalyses cis-aconitate(in) + citrate(out) = cis-aconitate(out) + citrate(in). The catalysed reaction is trans-aconitate(in) + citrate(out) = trans-aconitate(out) + citrate(in). It catalyses the reaction phosphoenolpyruvate(in) + citrate(out) = phosphoenolpyruvate(out) + citrate(in). It carries out the reaction maleate(in) + citrate(out) = maleate(out) + citrate(in). In terms of biological role, mitochondrial electroneutral antiporter that exports citrate from the mitochondria into the cytosol in exchange for malate. Also able to mediate the exchange of citrate for isocitrate, phosphoenolpyruvate, cis-aconitate and to a lesser extent trans-aconitate, maleate and succinate. In the cytoplasm, citrate plays important roles in fatty acid and sterol synthesis, regulation of glycolysis, protein acetylation, and other physiopathological processes. The chain is Tricarboxylate transport protein B, mitochondrial from Danio rerio (Zebrafish).